A 275-amino-acid polypeptide reads, in one-letter code: NH(3)-dependent NAD(+) synthetase (275 aa).

46–53 (GISGGQDS) contributes to the ATP binding site. Asp-52 serves as a coordination point for Mg(2+). Position 140 (Arg-140) interacts with deamido-NAD(+). An ATP-binding site is contributed by Thr-160. Glu-165 contacts Mg(2+). The deamido-NAD(+) site is built by Lys-173 and Asp-180. The ATP site is built by Lys-189 and Thr-211. Deamido-NAD(+) is bound at residue 260-261 (HK).

Belongs to the NAD synthetase family. As to quaternary structure, homodimer.

It carries out the reaction deamido-NAD(+) + NH4(+) + ATP = AMP + diphosphate + NAD(+) + H(+). Its pathway is cofactor biosynthesis; NAD(+) biosynthesis; NAD(+) from deamido-NAD(+) (ammonia route): step 1/1. In terms of biological role, catalyzes the ATP-dependent amidation of deamido-NAD to form NAD. Uses ammonia as a nitrogen source. This Salmonella enteritidis PT4 (strain P125109) protein is NH(3)-dependent NAD(+) synthetase.